The primary structure comprises 327 residues: Undecaprenyl-phosphate 4-deoxy-4-formamido-L-arabinose transferase (327 aa).

Topologically, residues 1–235 are cytoplasmic; that stretch reads MFDAAPIKKV…TCLTTTPLRL (235 aa). Residues 236 to 256 form a helical membrane-spanning segment; that stretch reads LSLLGSVIAIGGFSLSVLLIV. Residues 257–269 lie on the Periplasmic side of the membrane; that stretch reads LRLALGPQWAAEG. The chain crosses the membrane as a helical span at residues 270 to 290; it reads VFMLFAVLFTFIGAQFIGMGL. Residues 291–327 are Cytoplasmic-facing; it reads LGEYIGRIYNDVRARPRYFVQQVIYPESTPFTEESHQ.

This sequence belongs to the glycosyltransferase 2 family.

It is found in the cell inner membrane. The catalysed reaction is UDP-4-deoxy-4-formamido-beta-L-arabinose + di-trans,octa-cis-undecaprenyl phosphate = 4-deoxy-4-formamido-alpha-L-arabinopyranosyl di-trans,octa-cis-undecaprenyl phosphate + UDP. It participates in glycolipid biosynthesis; 4-amino-4-deoxy-alpha-L-arabinose undecaprenyl phosphate biosynthesis; 4-amino-4-deoxy-alpha-L-arabinose undecaprenyl phosphate from UDP-4-deoxy-4-formamido-beta-L-arabinose and undecaprenyl phosphate: step 1/2. It functions in the pathway bacterial outer membrane biogenesis; lipopolysaccharide biosynthesis. Functionally, catalyzes the transfer of 4-deoxy-4-formamido-L-arabinose from UDP to undecaprenyl phosphate. The modified arabinose is attached to lipid A and is required for resistance to polymyxin and cationic antimicrobial peptides. This Salmonella dublin (strain CT_02021853) protein is Undecaprenyl-phosphate 4-deoxy-4-formamido-L-arabinose transferase.